The chain runs to 92 residues: Small ribosomal subunit protein bS6 (92 aa).

Belongs to the bacterial ribosomal protein bS6 family.

In terms of biological role, binds together with bS18 to 16S ribosomal RNA. The sequence is that of Small ribosomal subunit protein bS6 from Clostridioides difficile (strain 630) (Peptoclostridium difficile).